Consider the following 603-residue polypeptide: Sabinene hydrate synthase, chloroplastic (603 aa).

The N-terminal 47 residues, methionine 1–arginine 47, are a transit peptide targeting the chloroplast. Residues aspartate 357 and aspartate 361 each contribute to the Mn(2+) site. The DDXXD motif motif lies at aspartate 357–aspartate 361. Homodimerization regions lie at residues tyrosine 363–leucine 369 and glutamate 435–proline 472. Mn(2+) is bound by residues aspartate 501 and glutamate 509.

This sequence belongs to the terpene synthase family. As to quaternary structure, homodimer. The cofactor is Mn(2+). Requires Mg(2+) as cofactor.

It localises to the plastid. The protein localises to the chloroplast. The catalysed reaction is (2E)-geranyl diphosphate + H2O = sabinene hydrate + diphosphate. The protein operates within secondary metabolite biosynthesis; terpenoid biosynthesis. Involved in the biosynthesis of phenolic monoterpenes natural products. Monoterpene synthase which catalyzes the conversion of geranyl diphosphate (GPP) to sabinene hydrate, mainly (Z)-sabinene hydrate and to a lower extent (E)-sabinene hydrate, and the formation of minor amounts and traces of several other monoterpenes (e.g. mainly alpha-thujene, alpha-pinene and myrcene). This Thymus vulgaris (Thyme) protein is Sabinene hydrate synthase, chloroplastic.